A 111-amino-acid chain; its full sequence is MVNLFPVFTLIVIITILITTRELSTTMLIVSLVTDYIIINTQYTEQQHEMNTFSTQQLPQKNSFNESYNKDKKSNTHIPYQWLAPELKEAENKYWWGNYDPYSEPVLAGAS.

Residues L10–L32 form a helical membrane-spanning segment. N-linked (GlcNAc...) asparagine; by host glycosylation occurs at N65.

It belongs to the asfivirus H108R family.

The protein resides in the virion membrane. This African swine fever virus (isolate Tick/Malawi/Lil 20-1/1983) (ASFV) protein is Inner membrane protein H108R.